The chain runs to 366 residues: tRNA/tmRNA (uracil-C(5))-methyltransferase (366 aa).

S-adenosyl-L-methionine contacts are provided by Gln-187, Tyr-215, Asn-220, Glu-236, and Asp-297. The active-site Nucleophile is Cys-322. Glu-356 (proton acceptor) is an active-site residue.

Belongs to the class I-like SAM-binding methyltransferase superfamily. RNA M5U methyltransferase family. TrmA subfamily.

It carries out the reaction uridine(54) in tRNA + S-adenosyl-L-methionine = 5-methyluridine(54) in tRNA + S-adenosyl-L-homocysteine + H(+). The catalysed reaction is uridine(341) in tmRNA + S-adenosyl-L-methionine = 5-methyluridine(341) in tmRNA + S-adenosyl-L-homocysteine + H(+). In terms of biological role, dual-specificity methyltransferase that catalyzes the formation of 5-methyluridine at position 54 (m5U54) in all tRNAs, and that of position 341 (m5U341) in tmRNA (transfer-mRNA). This Marinomonas sp. (strain MWYL1) protein is tRNA/tmRNA (uracil-C(5))-methyltransferase.